Here is a 343-residue protein sequence, read N- to C-terminus: Flavonoid 3'-O-methyltransferase FOMT (343 aa).

S-adenosyl-L-homocysteine-binding residues include G184, D207, D227, M228, M240, and K241. H245 serves as the catalytic Proton acceptor. Active-site residues include E273 and E305.

This sequence belongs to the class I-like SAM-binding methyltransferase superfamily. Cation-independent O-methyltransferase family. Homodimer.

The enzyme catalyses 3',5-dihydroxy-3,4',7-trimethoxyflavone + S-adenosyl-L-methionine = 5-hydroxy-3,7,3',4'-tetramethoxyflavone + S-adenosyl-L-homocysteine + H(+). Its pathway is flavonoid metabolism. Inhibited by nickel (NiCl(2) and NiSO(4)) and para-chloromercuribenzoate. Functionally, catalyzes the 3'- or 5'-O-methylation of partially methylated flavonols, but does not accept quercetin or caffeate as substrates for methylation. This Chrysosplenium americanum (American golden saxifrage) protein is Flavonoid 3'-O-methyltransferase FOMT.